The sequence spans 141 residues: Galactose-6-phosphate isomerase subunit LacA (141 aa).

The protein belongs to the LacAB/RpiB family. Heteromultimeric protein consisting of LacA and LacB.

It catalyses the reaction aldehydo-D-galactose 6-phosphate = keto-D-tagatose 6-phosphate. Its pathway is carbohydrate metabolism; D-galactose 6-phosphate degradation; D-tagatose 6-phosphate from D-galactose 6-phosphate: step 1/1. In Streptococcus agalactiae serotype Ia (strain ATCC 27591 / A909 / CDC SS700), this protein is Galactose-6-phosphate isomerase subunit LacA.